A 205-amino-acid polypeptide reads, in one-letter code: Proteasome subunit beta type-3 (205 aa).

The protein belongs to the peptidase T1B family. As to quaternary structure, the 26S proteasome consists of a 20S proteasome core and two 19S regulatory subunits. The 20S proteasome core is composed of 28 subunits that are arranged in four stacked rings, resulting in a barrel-shaped structure. The two end rings are each formed by seven alpha subunits, and the two central rings are each formed by seven beta subunits. The catalytic chamber with the active sites is on the inside of the barrel.

The protein localises to the cytoplasm. It is found in the nucleus. Non-catalytic component of the proteasome, a multicatalytic proteinase complex which is characterized by its ability to cleave peptides with Arg, Phe, Tyr, Leu, and Glu adjacent to the leaving group at neutral or slightly basic pH. The proteasome has an ATP-dependent proteolytic activity. The protein is Proteasome subunit beta type-3 (PSB3) of Trypanosoma brucei brucei.